A 22-amino-acid polypeptide reads, in one-letter code: Peptide PGLa-B1 (22 aa).

L22 carries the post-translational modification Leucine amide.

Expressed by the skin glands.

Its subcellular location is the secreted. In terms of biological role, has antibacterial and antifungal activity. This Xenopus borealis (Kenyan clawed frog) protein is Peptide PGLa-B1.